We begin with the raw amino-acid sequence, 304 residues long: Dihydroorotate dehydrogenase B (NAD(+)), catalytic subunit (304 aa).

FMN contacts are provided by residues serine 22 and 46–47 (KG). Substrate contacts are provided by residues lysine 46 and 70-74 (NAIGL). Residues asparagine 100 and asparagine 128 each contribute to the FMN site. Asparagine 128 provides a ligand contact to substrate. Cysteine 131 (nucleophile) is an active-site residue. Positions 166 and 192 each coordinate FMN. 193 to 194 (NT) is a binding site for substrate. FMN is bound by residues glycine 218, 244 to 245 (GG), and 266 to 267 (GT).

The protein belongs to the dihydroorotate dehydrogenase family. Type 1 subfamily. In terms of assembly, heterotetramer of 2 PyrK and 2 PyrD type B subunits. The cofactor is FMN.

The protein localises to the cytoplasm. It catalyses the reaction (S)-dihydroorotate + NAD(+) = orotate + NADH + H(+). Its pathway is pyrimidine metabolism; UMP biosynthesis via de novo pathway; orotate from (S)-dihydroorotate (NAD(+) route): step 1/1. Functionally, catalyzes the conversion of dihydroorotate to orotate with NAD(+) as electron acceptor. This is Dihydroorotate dehydrogenase B (NAD(+)), catalytic subunit (pyrD) from Pelobacter propionicus (strain DSM 2379 / NBRC 103807 / OttBd1).